The primary structure comprises 201 residues: Phosphoheptose isomerase (201 aa).

One can recognise an SIS domain in the interval 36 to 195 (IAKSLNEGGK…EDILFEIPAA (160 aa)). 51–53 (NGG) contacts substrate. Positions 60 and 64 each coordinate Zn(2+). Residues Glu-64, 93–94 (ND), 119–121 (STS), Ser-124, and Gln-171 contribute to the substrate site. Gln-171 and His-179 together coordinate Zn(2+).

This sequence belongs to the SIS family. GmhA subfamily. Zn(2+) is required as a cofactor.

It is found in the cytoplasm. The enzyme catalyses 2 D-sedoheptulose 7-phosphate = D-glycero-alpha-D-manno-heptose 7-phosphate + D-glycero-beta-D-manno-heptose 7-phosphate. Its pathway is carbohydrate biosynthesis; D-glycero-D-manno-heptose 7-phosphate biosynthesis; D-glycero-alpha-D-manno-heptose 7-phosphate and D-glycero-beta-D-manno-heptose 7-phosphate from sedoheptulose 7-phosphate: step 1/1. Its function is as follows. Catalyzes the isomerization of sedoheptulose 7-phosphate in D-glycero-D-manno-heptose 7-phosphate. The chain is Phosphoheptose isomerase from Thermodesulfovibrio yellowstonii (strain ATCC 51303 / DSM 11347 / YP87).